A 129-amino-acid polypeptide reads, in one-letter code: NADPH-dependent 7-cyano-7-deazaguanine reductase (129 aa).

The active-site Thioimide intermediate is Cys43. Asp50 acts as the Proton donor in catalysis. Residues 65–67 (VEL) and 84–85 (HE) contribute to the substrate site.

It belongs to the GTP cyclohydrolase I family. QueF type 1 subfamily.

Its subcellular location is the cytoplasm. It carries out the reaction 7-aminomethyl-7-carbaguanine + 2 NADP(+) = 7-cyano-7-deazaguanine + 2 NADPH + 3 H(+). It participates in tRNA modification; tRNA-queuosine biosynthesis. In terms of biological role, catalyzes the NADPH-dependent reduction of 7-cyano-7-deazaguanine (preQ0) to 7-aminomethyl-7-deazaguanine (preQ1). This Aquifex aeolicus (strain VF5) protein is NADPH-dependent 7-cyano-7-deazaguanine reductase.